We begin with the raw amino-acid sequence, 196 residues long: Serine recombinase PinR (196 aa).

Residues 3–143 (RIFAYCRIST…SGIVRARGAG (141 aa)) enclose the Resolvase/invertase-type recombinase catalytic domain. The O-(5'-phospho-DNA)-serine intermediate role is filled by Ser-11.

This sequence belongs to the site-specific recombinase resolvase family.

The protein is Serine recombinase PinR (pinR) of Escherichia coli (strain K12).